We begin with the raw amino-acid sequence, 796 residues long: Kinesin-like protein KIF3C (796 aa).

In terms of domain architecture, Kinesin motor spans 10 to 367; it reads ALKVVARCRP…LRFANRAKNI (358 aa). 97–104 lines the ATP pocket; the sequence is GQTGTGKT. 3 disordered regions span residues 252 to 292, 397 to 422, and 758 to 796; these read RQNK…PKEA, EKKG…APAG, and KVRK…VDHD. Low complexity predominate over residues 256–269; sequence AGPNAAGGPATQPT. Residues 378 to 632 adopt a coiled-coil conformation; it reads KDTLLREFQE…NEQTRELKLK (255 aa). Over residues 401–416 the composition is skewed to basic residues; sequence MLGKRPRRKSSRRKKA. The interval 633–793 is globular; the sequence is YLIIENFIPP…SVPLHPATVV (161 aa).

This sequence belongs to the TRAFAC class myosin-kinesin ATPase superfamily. Kinesin family. Kinesin II subfamily. In terms of assembly, heterodimer of KIF3A and KIF3C.

The protein resides in the cytoplasm. It localises to the cytoskeleton. In terms of biological role, microtubule-based anterograde translocator for membranous organelles. The chain is Kinesin-like protein KIF3C (Kif3c) from Mus musculus (Mouse).